The primary structure comprises 668 residues: CLK4-associating serine/arginine rich protein (668 aa).

Ser-101 is modified (phosphoserine). Disordered regions lie at residues 173 to 232 and 252 to 668; these read AEVE…GMAD and AKAL…HYRH. A compositionally biased stretch (acidic residues) spans 182 to 214; sequence PEEEESPAEEESNSDEDEVIPDIDVEVDVDELN. The span at 265 to 283 shows a compositional bias: basic residues; it reads RRSRRQRREFREKRLRGRK. Phosphoserine occurs at positions 285 and 294. A compositionally biased stretch (basic and acidic residues) spans 290-313; sequence ARRDSPTYDPYKRSPSESSSESRS. At Thr-327 the chain carries Phosphothreonine. Phosphoserine occurs at positions 331 and 335. Positions 340–353 are enriched in low complexity; it reads AAAAAAAAASGAAP. The span at 354 to 365 shows a compositional bias: pro residues; it reads GKPPAPPQPGGP. The segment covering 378 to 395 has biased composition (low complexity); it reads SSSSASRTSSSRSSSRSS. Positions 396 to 435 are enriched in basic residues; the sequence is SRSRRGYYRSGRHARSRSRSWSRSRSRSRRYSRSRSRGRR. Residues 436–446 are compositionally biased toward basic and acidic residues; it reads HSDGGSRDGHR. Residues 475–486 show a composition bias toward basic residues; that stretch reads RGARGPRHHSSS. Low complexity-rich tracts occupy residues 487–510 and 518–527; these read HSRS…SRSQ and QSHSQSQSHS. Ser-541 bears the Phosphoserine mark. Thr-567 carries the post-translational modification Phosphothreonine. Residues 579 to 641 are a coiled coil; sequence ALNRQFKADK…ERQYSRQSRS (63 aa). Composition is skewed to basic and acidic residues over residues 584 to 611 and 619 to 635; these read FKAD…ELRA and KERE…ERQY. Residues 636-645 show a composition bias toward low complexity; sequence SRQSRSPSPR. Positions 653–668 are enriched in basic residues; that stretch reads SRRRSRSRSRSPHYRH.

It belongs to the splicing factor SR family. Probably interacts with CLK4. Phosphorylated in vitro by CLK4.

The protein localises to the nucleus. In terms of biological role, probably functions as an alternative splicing regulator. May regulate the mRNA splicing of genes such as CLK1. May act by regulating members of the CLK kinase family. The sequence is that of CLK4-associating serine/arginine rich protein (Clasrp) from Rattus norvegicus (Rat).